We begin with the raw amino-acid sequence, 1008 residues long: Retinoblastoma-related protein (1008 aa).

A disordered region spans residues 375 to 394 (KRKVDSMTSPTKTITSPLSP). Residues 380-392 (SMTSPTKTITSPL) are compositionally biased toward polar residues. A domain A region spans residues 404 to 605 (TPVSTAMTTA…EKGSSMYNSL (202 aa)). A pocket region spans residues 404 to 853 (TPVSTAMTTA…NEVFIPSVKP (450 aa)). Residues 606-722 (TIARPNLSNE…HPTRGETCGE (117 aa)) are spacer. Residues 723–853 (TAVNLFFSKI…NEVFIPSVKP (131 aa)) form a domain B region. 2 disordered regions span residues 865–899 (KNPNNQVSDSNKKDESGPCPCPGSPKVSSFPSLPD) and 988–1008 (LQNGQNGKGPSSSSGQELKTE).

The protein belongs to the retinoblastoma protein (RB) family.

The protein localises to the nucleus. Functionally, regulator of biological processes that recruits a histone deacetylase to control gene transcription. May play a role in the entry into mitosis, negatively regulating the cell proliferation. Formation of stable complexes with geminiviridae replication-associated proteins may create a cellular environment which favors viral DNA replication. The sequence is that of Retinoblastoma-related protein (RBR) from Pilosella officinarum (Mouse-ear hawkweed).